A 312-amino-acid chain; its full sequence is MKVAVLGAAGGIGQALALLLKTQLPSGSELSLYDIAPVTPGVAVDLSHIPTAVKIKGFSGEDATPALEGADVVLISAGVARKPGMDRSDLFNVNAGIVKNLVQQVAKTCPKACIGIITNPVNTTVAIAAEVLKKAGVYDKNKLFGVTTLDIIRSNTFVAELKGKQPGEVEVPVIGGHSGVTILPLLSQVPGVSFTEQEVADLTKRIQNAGTEVVEAKAGGGSATLSMGQAAARFGLSLVRALQGEQGVVECAYVEGDGQYARFFSQPLLLGKNGVEERKSIGTLSAFEQNALEGMLDTLKKDIALGEEFVNK.

NAD(+) contacts are provided by residues Gly7–Gly13 and Asp34. Residues Arg81 and Arg87 each contribute to the substrate site. NAD(+) is bound by residues Asn94 and Ile117–Asn119. Substrate contacts are provided by Asn119 and Arg153. His177 acts as the Proton acceptor in catalysis. Met227 contacts NAD(+).

It belongs to the LDH/MDH superfamily. MDH type 1 family. In terms of assembly, homodimer.

The catalysed reaction is (S)-malate + NAD(+) = oxaloacetate + NADH + H(+). Catalyzes the reversible oxidation of malate to oxaloacetate. The sequence is that of Malate dehydrogenase from Escherichia coli O139:H28 (strain E24377A / ETEC).